A 1444-amino-acid polypeptide reads, in one-letter code: DNA polymerase III PolC-type (1444 aa).

The Exonuclease domain occupies 428 to 584 (YCVFDVETTG…FDAEATAYLA (157 aa)).

This sequence belongs to the DNA polymerase type-C family. PolC subfamily.

The protein localises to the cytoplasm. It catalyses the reaction DNA(n) + a 2'-deoxyribonucleoside 5'-triphosphate = DNA(n+1) + diphosphate. In terms of biological role, required for replicative DNA synthesis. This DNA polymerase also exhibits 3' to 5' exonuclease activity. The polypeptide is DNA polymerase III PolC-type (Listeria innocua serovar 6a (strain ATCC BAA-680 / CLIP 11262)).